The chain runs to 347 residues: LRP2-binding protein (347 aa).

One copy of the TPR repeat lies at 59 to 92 (TLAYFLRGQLYFEEGWYEEALEQFEEIKEKDHQA). Sel1-like repeat units lie at residues 93–125 (TYQL…DSPC), 133–168 (FAAA…DNGN), 173–206 (VKAQ…GNGN), 207–242 (LESQ…ERGN), 243–277 (VYAQ…EVHD), and 297–332 (AMAS…RLNP).

Interacts with LRP2.

The protein resides in the cytoplasm. In terms of biological role, may act as an adapter that regulates LRP2 function. The polypeptide is LRP2-binding protein (LRP2BP) (Homo sapiens (Human)).